The primary structure comprises 194 residues: Large ribosomal subunit protein uL6x (194 aa).

Threonine 75 is subject to Phosphothreonine.

Belongs to the universal ribosomal protein uL6 family.

The sequence is that of Large ribosomal subunit protein uL6x (RPL9D) from Arabidopsis thaliana (Mouse-ear cress).